The sequence spans 293 residues: MQLIDGKAISELVKQEIAAEVAGIVAKGGKRPHLAAILVGHDGGSETYVAAKVKACEVCGFKSSLIRYEADVTEEELLAKVRELNEDADVDGFIVQLPLPKHISEQKVIETIDYRKDVDGFHPINVGRMSIGLPCYVSATPNGILELLKRYHIETQGKKCVVLGRSNIVGKPMASLMMQKAYPGDATVTVCHSRSKDLVKECQEADIIIAALGQPNFVKAEMVKEGAVVIDVGTTRVPDATKKSGFKLTGDVKFDEVAPKCSYITPVPGGVGPMTIVSLMKNTLLAGKKAIYK.

NADP(+)-binding positions include 164–166, S193, and T234; that span reads GRS.

It belongs to the tetrahydrofolate dehydrogenase/cyclohydrolase family. As to quaternary structure, homodimer.

The enzyme catalyses (6R)-5,10-methylene-5,6,7,8-tetrahydrofolate + NADP(+) = (6R)-5,10-methenyltetrahydrofolate + NADPH. It carries out the reaction (6R)-5,10-methenyltetrahydrofolate + H2O = (6R)-10-formyltetrahydrofolate + H(+). It functions in the pathway one-carbon metabolism; tetrahydrofolate interconversion. Catalyzes the oxidation of 5,10-methylenetetrahydrofolate to 5,10-methenyltetrahydrofolate and then the hydrolysis of 5,10-methenyltetrahydrofolate to 10-formyltetrahydrofolate. The protein is Bifunctional protein FolD of Phocaeicola vulgatus (strain ATCC 8482 / DSM 1447 / JCM 5826 / CCUG 4940 / NBRC 14291 / NCTC 11154) (Bacteroides vulgatus).